Reading from the N-terminus, the 391-residue chain is Putative gustatory receptor 36a (391 aa).

The Cytoplasmic segment spans residues M1 to D3. A helical membrane pass occupies residues W4–F24. At E25 to R38 the chain is on the extracellular side. A helical transmembrane segment spans residues G39–S59. Topologically, residues K60–Q73 are cytoplasmic. The chain crosses the membrane as a helical span at residues L74–I94. Residues L95–R126 lie on the Extracellular side of the membrane. The chain crosses the membrane as a helical span at residues W127 to S147. The Cytoplasmic portion of the chain corresponds to M148–D165. A helical transmembrane segment spans residues F166–V186. The Extracellular portion of the chain corresponds to R187 to Q247. A helical transmembrane segment spans residues V248–T268. The Cytoplasmic portion of the chain corresponds to Y269–A290. The helical transmembrane segment at L291–L311 threads the bilayer. The Extracellular segment spans residues K312–F391.

It belongs to the insect chemoreceptor superfamily. Gustatory receptor (GR) family. Gr22e subfamily.

The protein resides in the cell membrane. Its function is as follows. Probable gustatory receptor which mediates acceptance or avoidance behavior, depending on its substrates. The sequence is that of Putative gustatory receptor 36a (Gr36a) from Drosophila melanogaster (Fruit fly).